Consider the following 376-residue polypeptide: Fibromodulin (376 aa).

A signal peptide spans 1–18; the sequence is MQWASILLLAGLCSLSWA. Q19 carries the post-translational modification Pyrrolidone carboxylic acid. Sulfotyrosine is present on residues Y20, Y38, Y45, Y47, Y50, Y53, Y55, Y63, and Y65. The LRRNT domain occupies 67-105; that stretch reads SPPQPEPRDCPQECDCPPNFPTAMYCDNRNLKYLPFVPS. LRR repeat units lie at residues 106 to 127, 130 to 151, 156 to 176, 177 to 198, 201 to 222, 224 to 245, 246 to 266, and 269 to 289; these read RMKY…VFDN, GLLW…KKVF, HLER…PLPR, SLRE…ALEG, NLTA…MKGL, SLIL…LPSA, LEQL…YFRG, and KLLY…ASNT. N127 carries an N-linked (GlcNAc...) (keratan sulfate) asparagine glycan. A glycan (N-linked (GlcNAc...) (keratan sulfate) asparagine) is linked at N166. An N-linked (GlcNAc...) (keratan sulfate) asparagine glycan is attached at N201. N291 carries an N-linked (GlcNAc...) (keratan sulfate) asparagine glycan. LRR repeat units follow at residues 294–315 and 316–335; these read SLLE…STNL and ENLY…SFCT. Cysteines 334 and 367 form a disulfide. Residue N341 is glycosylated (N-linked (GlcNAc...) asparagine). The stretch at 344 to 365 is one LRR 11 repeat; the sequence is KLQVLRLDGNEIKRSAMPADAP.

The protein belongs to the small leucine-rich proteoglycan (SLRP) family. SLRP class II subfamily. Binds to type I and type II collagen. Post-translationally, binds keratan sulfate chains.

The protein resides in the secreted. It localises to the extracellular space. It is found in the extracellular matrix. In terms of biological role, affects the rate of fibrils formation. May have a primary role in collagen fibrillogenesis. The sequence is that of Fibromodulin (FMOD) from Bos taurus (Bovine).